The sequence spans 572 residues: MARILITSAIPYINGIKHLGNLVGSQLPADLYARYMRGRGHEVMFICATDEHGTPAELAAAKAGKPVEDYCAEMHEVQKEIAAGFRLSFDHFGRSSSARNHRLTQHFAGALAENGFIEEVVERQFFSVADNRFLPDRYIEGTCPNCGYDKARGDQCENCTKQLDPTDLIDPRSAISGSTELELRETKHLYLRQRALKDEIEAWIDSKTDWPVLTTSIAKKWLHDGEGLQDRGITRDLKWGVPVRKGSEPWPGMEGKVFYVWFDAPIEYIAGTAEWADANGKADADWERWWRTDRGAEDVRYVQFMGKDNVPFHTLSFPATIMGSREPWKLVDYIKSFNYLNYDGGQFSTSQGRGVFMDQALSILPADYWRWWLLSHAPENSDSEFTWENFQSSVNKDLADVLGNLVSRVTKFCRSKFGETVPAGGSPGEREHQLVAELQQQLAAYETCMEAMEVRKAAAELRALWVAGNEYLQSAAPWTVVKTDPEQAQAMIRLALNLIRLYAVISRPFIPDAAASMMASLGCEDWSWPADVGRALEVLPPGHGFTTPEVLFRKITDEERAEWQTRFSGVRT.

The 'HIGH' region signature appears at 11 to 21; the sequence is PYINGIKHLGN. Residues Cys-143, Cys-146, Cys-156, and Cys-159 each coordinate Zn(2+). A 'KMSKS' region motif is present at residues 346-350; it reads QFSTS. Residue Thr-349 coordinates ATP.

Belongs to the class-I aminoacyl-tRNA synthetase family. MetG type 1 subfamily. Monomer. It depends on Zn(2+) as a cofactor.

The protein resides in the cytoplasm. The catalysed reaction is tRNA(Met) + L-methionine + ATP = L-methionyl-tRNA(Met) + AMP + diphosphate. Is required not only for elongation of protein synthesis but also for the initiation of all mRNA translation through initiator tRNA(fMet) aminoacylation. This chain is Methionine--tRNA ligase, found in Cereibacter sphaeroides (strain KD131 / KCTC 12085) (Rhodobacter sphaeroides).